Here is a 411-residue protein sequence, read N- to C-terminus: Squalene synthase (411 aa).

Residues Arg-49 and Arg-74 each coordinate NADP(+). 3 residues coordinate Mg(2+): Asp-77, Glu-80, and Asp-81. Residues Arg-212, Lys-312, and Arg-314 each contribute to the NADP(+) site. The helical transmembrane segment at 388–408 (SPVLIVVIFIILAIILAQLFG) threads the bilayer.

Belongs to the phytoene/squalene synthase family. Mg(2+) serves as cofactor.

Its subcellular location is the membrane. The enzyme catalyses 2 (2E,6E)-farnesyl diphosphate + NADH + H(+) = squalene + 2 diphosphate + NAD(+). The catalysed reaction is 2 (2E,6E)-farnesyl diphosphate + NADPH + H(+) = squalene + 2 diphosphate + NADP(+). Converts farnesyl diphosphate (FPP) into squalene, a precursor for sterol biosynthesis in eukaryotes. This chain is Squalene synthase, found in Solanum lycopersicum (Tomato).